Consider the following 118-residue polypeptide: Large ribosomal subunit protein uL18 (118 aa).

This sequence belongs to the universal ribosomal protein uL18 family. In terms of assembly, part of the 50S ribosomal subunit; part of the 5S rRNA/L5/L18/L25 subcomplex. Contacts the 5S and 23S rRNAs.

This is one of the proteins that bind and probably mediate the attachment of the 5S RNA into the large ribosomal subunit, where it forms part of the central protuberance. The chain is Large ribosomal subunit protein uL18 from Rickettsia bellii (strain OSU 85-389).